The primary structure comprises 700 residues: Polyribonucleotide nucleotidyltransferase (700 aa).

Positions 485 and 491 each coordinate Mg(2+). One can recognise a KH domain in the interval 552 to 611; it reads PRITVIKINPEKIRDVIGKGGAVIRALTEETGTTIELEDDGTVKIASSNGEATKEAIRRI. Residues 621–689 enclose the S1 motif domain; that stretch reads GRIYNGKVIR…RQGRVRLSIK (69 aa).

It belongs to the polyribonucleotide nucleotidyltransferase family. Component of the RNA degradosome, which is a multiprotein complex involved in RNA processing and mRNA degradation. It depends on Mg(2+) as a cofactor.

Its subcellular location is the cytoplasm. It catalyses the reaction RNA(n+1) + phosphate = RNA(n) + a ribonucleoside 5'-diphosphate. In terms of biological role, involved in mRNA degradation. Catalyzes the phosphorolysis of single-stranded polyribonucleotides processively in the 3'- to 5'-direction. In Shewanella baltica (strain OS155 / ATCC BAA-1091), this protein is Polyribonucleotide nucleotidyltransferase.